The primary structure comprises 1342 residues: DNA-directed RNA polymerase subunit beta (1342 aa).

It belongs to the RNA polymerase beta chain family. As to quaternary structure, the RNAP catalytic core consists of 2 alpha, 1 beta, 1 beta' and 1 omega subunit. When a sigma factor is associated with the core the holoenzyme is formed, which can initiate transcription.

The catalysed reaction is RNA(n) + a ribonucleoside 5'-triphosphate = RNA(n+1) + diphosphate. DNA-dependent RNA polymerase catalyzes the transcription of DNA into RNA using the four ribonucleoside triphosphates as substrates. The sequence is that of DNA-directed RNA polymerase subunit beta from Citrobacter koseri (strain ATCC BAA-895 / CDC 4225-83 / SGSC4696).